The following is a 193-amino-acid chain: MSEWLMLLLGTALVNNVVLVKFLGLCPFMGVSKKVDSAIGMGMATTFVLTLASALTWLIEHFLLVPFDFGYLRILSFILVIAATVQFVEMVIKKTAPDLYKVLGIYLPLITTNCAVLGVALLNAGEGAGFVRSVLYGFGSALGFTMVMVLFAGLRERLALTSVPAAFSGAPISFITAGLLSLAFMGFAGLTNH.

Helical transmembrane passes span 5-25 (LMLL…FLGL), 39-59 (IGMG…TWLI), 62-82 (FLLV…LVIA), 102-122 (VLGI…VALL), 134-154 (VLYG…FAGL), and 170-190 (APIS…FAGL).

It belongs to the NqrDE/RnfAE family. The complex is composed of six subunits: RnfA, RnfB, RnfC, RnfD, RnfE and RnfG.

Its subcellular location is the cell inner membrane. In terms of biological role, part of a membrane-bound complex that couples electron transfer with translocation of ions across the membrane. This chain is Ion-translocating oxidoreductase complex subunit A, found in Azoarcus sp. (strain BH72).